Reading from the N-terminus, the 435-residue chain is GTPase Der (435 aa).

2 EngA-type G domains span residues 2 to 167 (ATVV…RESG) and 178 to 351 (PKIA…ESYC). GTP-binding positions include 8-15 (GRANVGKS), 55-59 (DTCGV), 118-121 (NKSE), 184-191 (GKPNVGKS), 231-235 (DTAGM), and 297-300 (NKFD). Residues 352 to 435 (RKVPQQLLSK…PLVIEFKSRR (84 aa)) enclose the KH-like domain.

The protein belongs to the TRAFAC class TrmE-Era-EngA-EngB-Septin-like GTPase superfamily. EngA (Der) GTPase family. As to quaternary structure, associates with the 50S ribosomal subunit.

Its function is as follows. GTPase that plays an essential role in the late steps of ribosome biogenesis. The polypeptide is GTPase Der (Pseudothermotoga lettingae (strain ATCC BAA-301 / DSM 14385 / NBRC 107922 / TMO) (Thermotoga lettingae)).